The primary structure comprises 95 residues: Protein TusB (95 aa).

The protein belongs to the DsrH/TusB family. In terms of assembly, heterohexamer, formed by a dimer of trimers. The hexameric TusBCD complex contains 2 copies each of TusB, TusC and TusD. The TusBCD complex interacts with TusE.

The protein localises to the cytoplasm. In terms of biological role, part of a sulfur-relay system required for 2-thiolation of 5-methylaminomethyl-2-thiouridine (mnm(5)s(2)U) at tRNA wobble positions. This Buchnera aphidicola subsp. Baizongia pistaciae (strain Bp) protein is Protein TusB.